A 154-amino-acid chain; its full sequence is Transcriptional repressor NrdR (154 aa).

A zinc finger spans residues 3–34 (CPFCAHPDTRVADSRLMEERNAVRRRRHCPNC). Residues 49–139 (PAVIGPDKKR…LHKRFDNPAD (91 aa)) enclose the ATP-cone domain.

This sequence belongs to the NrdR family. It depends on Zn(2+) as a cofactor.

Functionally, negatively regulates transcription of bacterial ribonucleotide reductase nrd genes and operons by binding to NrdR-boxes. In Neisseria meningitidis serogroup B (strain ATCC BAA-335 / MC58), this protein is Transcriptional repressor NrdR.